The primary structure comprises 407 residues: Phosphopentomutase (407 aa).

Mn(2+) contacts are provided by aspartate 10, aspartate 306, histidine 311, aspartate 347, histidine 348, and histidine 359.

It belongs to the phosphopentomutase family. Mn(2+) is required as a cofactor.

It is found in the cytoplasm. It catalyses the reaction 2-deoxy-alpha-D-ribose 1-phosphate = 2-deoxy-D-ribose 5-phosphate. It carries out the reaction alpha-D-ribose 1-phosphate = D-ribose 5-phosphate. It functions in the pathway carbohydrate degradation; 2-deoxy-D-ribose 1-phosphate degradation; D-glyceraldehyde 3-phosphate and acetaldehyde from 2-deoxy-alpha-D-ribose 1-phosphate: step 1/2. In terms of biological role, isomerase that catalyzes the conversion of deoxy-ribose 1-phosphate (dRib-1-P) and ribose 1-phosphate (Rib-1-P) to deoxy-ribose 5-phosphate (dRib-5-P) and ribose 5-phosphate (Rib-5-P), respectively. The polypeptide is Phosphopentomutase (Shigella dysenteriae serotype 1 (strain Sd197)).